Consider the following 3032-residue polypeptide: Biorientation of chromosomes in cell division protein 1-like 1 (3032 aa).

A compositionally biased stretch (pro residues) spans 1–31 (MATNPQPQPPPPAPPPPPPQPQPPPPPPGPG). Disordered stretches follow at residues 1–48 (MATN…GAGD), 164–195 (EEAA…SANV), 214–397 (NAAR…LDSD), and 409–465 (VHTS…RGVR). Gly residues predominate over residues 32-46 (AGPGASGPGSAGAGA). Over residues 234-243 (KLSSQPSTDV) the composition is skewed to polar residues. Residues 244–261 (STDKERGSEDATEREKAT) are compositionally biased toward basic and acidic residues. Residue serine 264 is modified to Phosphoserine. The span at 310–391 (TDPKIKSMDK…RAAEGTKEDC (82 aa)) shows a compositional bias: basic and acidic residues. Positions 416–441 (SFEEDTEEEVVVSESMEEGEITSEDE) are enriched in acidic residues. An N6-acetyllysine modification is found at lysine 471. Serine 480 and serine 482 each carry phosphoserine. Disordered regions lie at residues 480–1153 (SDSD…HKAT), 1165–1296 (MVDS…HNSN), 1309–1366 (GGRA…LSED), 1424–1491 (AAGE…SGRR), 1675–1701 (GSLS…TEGT), 1740–1858 (AKPQ…GHAS), and 1934–1978 (ALAG…ISTG). Basic and acidic residues-rich tracts occupy residues 488 to 503 (VEQR…EERL) and 510 to 525 (REKL…EKTK). The residue at position 534 (lysine 534) is an N6-acetyllysine. Composition is skewed to basic and acidic residues over residues 547 to 568 (LEPK…EKKV) and 578 to 653 (SRNV…EYKR). Serine 632 and serine 656 each carry phosphoserine. Residue threonine 657 is modified to Phosphothreonine. Composition is skewed to basic and acidic residues over residues 668-736 (TDTR…DKPS), 743-768 (GDSV…ESVR), and 799-846 (RDGK…KLQK). Over residues 848-859 (ALSSKQHSVTSQ) the composition is skewed to polar residues. 4 stretches are compositionally biased toward basic and acidic residues: residues 860–872 (KRSE…KCET), 934–960 (KPDK…RTSE), 978–1015 (AQKD…DGHR), and 1022–1069 (SNKD…ENRR). Phosphoserine is present on serine 1071. A compositionally biased stretch (polar residues) spans 1086-1096 (MSGTTSSSSLQ). Phosphoserine is present on serine 1138. Over residues 1272–1286 (STDSDLLSSSGSVTV) the composition is skewed to low complexity. Residues 1312–1329 (ASTSLANHSDVPNQYSTV) are compositionally biased toward polar residues. Phosphoserine is present on residues serine 1315 and serine 1364. Basic and acidic residues-rich tracts occupy residues 1428–1470 (HVVD…RRDS) and 1479–1491 (GKME…SGRR). Phosphoserine is present on residues serine 1676 and serine 1685. Over residues 1958–1970 (HHSDSQLTRKETV) the composition is skewed to basic and acidic residues. Phosphoserine occurs at positions 1989, 2001, 2092, and 2166. The disordered stretch occupies residues 2082-2101 (PMPSAVSGENSQLTASRSEE). Over residues 2088-2097 (SGENSQLTAS) the composition is skewed to polar residues. Disordered stretches follow at residues 2303–2322 (EENQ…LATK), 2370–2469 (EPSV…HCLT), 2536–2559 (EGGL…EKMG), and 2575–2596 (DVTL…PPKG). 2 positions are modified to phosphoserine: serine 2417 and serine 2443. Over residues 2449–2459 (CLREPEQKPAE) the composition is skewed to basic and acidic residues. Serine 2554 is subject to Phosphoserine. At serine 2681 the chain carries Phosphoserine. The segment at 2682–3032 (TEALSGCSVE…DENPLKKAKR (351 aa)) is disordered. 2 stretches are compositionally biased toward acidic residues: residues 2692-2701 (ADPEEVEEEE) and 2715-2725 (SSEEELDDSPD). The span at 2727 to 2750 (LDSRIETAQRQYSETEPHDTKEEN) shows a compositional bias: basic and acidic residues. The segment covering 2758-2769 (SSVTSKTNSSTG) has biased composition (polar residues). Residues 2782–2804 (TGEKTEPNEDDGSIKSQEDDHPI) show a composition bias toward basic and acidic residues. Over residues 2805–2815 (IIKRRRGRPRK) the composition is skewed to basic residues. Positions 2807–2819 (KRRRGRPRKYPAE) form a DNA-binding region, a.T hook. The span at 2822 to 2832 (FKSKEDSKTET) shows a compositional bias: basic and acidic residues. The segment covering 2833–2843 (DITTVEQSSPS) has biased composition (polar residues). Serine 2840 and serine 2841 each carry phosphoserine. Basic and acidic residues predominate over residues 2853–2867 (ESNKEIANLEEKSTS). Serine 2888 bears the Phosphoserine mark. Threonine 2890 bears the Phosphothreonine mark. A phosphoserine mark is found at serine 2892, serine 2898, and serine 2907. Glycyl lysine isopeptide (Lys-Gly) (interchain with G-Cter in ubiquitin) cross-links involve residues lysine 2915 and lysine 2916. Positions 2919–2932 (ESDEEEEEEEEEEP) are enriched in acidic residues. Serine 2920 carries the phosphoserine modification. Over residues 2975-2987 (LAKEKLSTSEKVS) the composition is skewed to basic and acidic residues. Serine 3000 carries the post-translational modification Phosphoserine. The segment covering 3020 to 3032 (QKVDENPLKKAKR) has biased composition (basic and acidic residues).

The protein belongs to the BOD1 family. Interacts (via COMPASS-Shg1 domain) with SETD1A at stalled replication forks; this interaction mediates FANCD2-dependent nucleosome remodeling at reversed forks protecting them from nucleolytic degradation.

Its subcellular location is the chromosome. Component of the fork protection machinery required to protect stalled/damaged replication forks from uncontrolled DNA2-dependent resection. Acts by stabilizing RAD51 at stalled replication forks and protecting RAD51 nucleofilaments from the antirecombinogenic activities of FBH1 and BLM. Does not regulate spindle orientation. This chain is Biorientation of chromosomes in cell division protein 1-like 1, found in Mus musculus (Mouse).